A 555-amino-acid polypeptide reads, in one-letter code: Bifunctional epoxide hydrolase 2 (555 aa).

Positions Met-1–Thr-224 are phosphatase. Positions 9 and 11 each coordinate Mg(2+). Lys-43 bears the N6-acetyllysine mark. Residue Thr-123–Asn-124 participates in phosphate binding. Residue Asp-185 participates in Mg(2+) binding. 2 positions are modified to N6-acetyllysine: Lys-191 and Lys-215. Positions Ser-235 to Leu-555 are epoxide hydrolase. The AB hydrolase-1 domain maps to Pro-259–Pro-531. Residue Asp-335 is the Nucleophile of the active site. The residue at position 370 (Ser-370) is a Phosphoserine. Substrate is bound at residue Tyr-383. Position 455 is an N6-succinyllysine (Lys-455). The active-site Proton donor is the Tyr-466. An N6-succinyllysine modification is found at Lys-505. Cys-522 carries S-(15-deoxy-Delta12,14-prostaglandin J2-9-yl)cysteine lipidation. His-524 serves as the catalytic Proton acceptor. Residues Ser-553–Leu-555 carry the Microbody targeting signal motif. An N6-succinyllysine modification is found at Lys-554.

Belongs to the AB hydrolase superfamily. Epoxide hydrolase family. Homodimer. The cofactor is Mg(2+). In terms of processing, the covalent modification of cysteine by 15-deoxy-Delta12,14-prostaglandin-J2 is autocatalytic and reversible. It may occur as an alternative to other cysteine modifications, such as S-nitrosylation and S-palmitoylation.

The protein resides in the cytoplasm. The protein localises to the peroxisome. It catalyses the reaction an epoxide + H2O = an ethanediol. The enzyme catalyses (9S,10S)-10-hydroxy-9-(phosphooxy)octadecanoate + H2O = (9S,10S)-9,10-dihydroxyoctadecanoate + phosphate. The catalysed reaction is (14R,15S)-epoxy-(5Z,8Z,11Z)-eicosatrienoate + H2O = (14R,15R)-dihydroxy-(5Z,8Z,11Z)-eicosatrienoate. Inhibited by 1-(1-acetylpiperidin-4-yl)-3-(4-(trifl uoromethoxy)phenyl)urea (TPAU), 1-cyclohexyl-3-dodecylurea (CDU), 12-(3-adamantan-1-yl-ureido)-dodecanoic acid (AUDA), 1-((3S, 5S, 7S)-adamantan-1-yl)-3-(5-(2-(2-ethoxyethoxy) ethoxy)pentyl)urea (AEPU), N-adamantyl-N[']-cyclohexyl urea (ACU), 4-(((1S, 4S)-4-(3-((3S, 5S, 7S)-adamantan-1-yl) ureido)cyclohexyl)oxy)benzoic acid (c-AUCB), 4-(((1R, 4R)-4-(3-((3S, 5S, 7S)-adamantan-1-yl)ureido)cyclohexyl)oxy)benzoic acid (t-AUCB), 4-(((1R, 4R)-4-(3-(4(trifluoromethoxy)phenyl)ureido)cyclohexyl)oxy)benzoic acid (t-TAUCB) and to a lesser extent by 8-(3-((3S, 5S, 7S)-adamantan-1-yl)ureido) octanoic acid (AUOA). Functionally, bifunctional enzyme. The C-terminal domain has epoxide hydrolase activity and acts on epoxides (alkene oxides, oxiranes) and arene oxides. Plays a role in xenobiotic metabolism by degrading potentially toxic epoxides. Also determines steady-state levels of physiological mediators. The N-terminal domain has lipid phosphatase activity, with the highest activity towards threo-9,10-phosphonooxy-hydroxy-octadecanoic acid, followed by erythro-9,10-phosphonooxy-hydroxy-octadecanoic acid, 12-phosphonooxy-octadec-9Z-enoic acid and 12-phosphonooxy-octadec-9E-enoic acid. The polypeptide is Bifunctional epoxide hydrolase 2 (EPHX2) (Sus scrofa (Pig)).